A 407-amino-acid chain; its full sequence is Peptidase T (407 aa).

A Zn(2+)-binding site is contributed by histidine 82. Residue aspartate 84 is part of the active site. Residue aspartate 143 participates in Zn(2+) binding. Residue glutamate 177 is the Proton acceptor of the active site. Residues glutamate 178, aspartate 200, and histidine 382 each coordinate Zn(2+).

It belongs to the peptidase M20B family. Zn(2+) serves as cofactor.

It localises to the cytoplasm. The catalysed reaction is Release of the N-terminal residue from a tripeptide.. Cleaves the N-terminal amino acid of tripeptides. This chain is Peptidase T, found in Streptococcus pyogenes serotype M28 (strain MGAS6180).